The sequence spans 262 residues: MRKHPFHLVDPSPWPLLASFAAFLSTTGGVMYMHAYSGGGLLLAIGQLSLFYVMYVWWRDVIREGTYQGHHTNPVQVGLRYGMLLFILSEIMFFFAFFWAFFHSSLAPTIEIGAVWPPKGIQVLNPWEIPFLNTIILLTSGASVTWAHHAILAGNRKQGIISLAITVLLAVIFTGFQALEYLEAPFTISDGIYGSTFYLATGFHGFHVIIGTIFIAVCLFRLVLHHFSKSHHLGFEAAAWYWHMVDVVWLFLFVCIYYWGGA.

7 helical membrane passes run 13–33 (PWPL…VMYM), 38–58 (GGGL…YVWW), 82–102 (GMLL…WAFF), 134–154 (TIIL…ILAG), 159–179 (GIIS…FQAL), 200–220 (ATGF…VCLF), and 237–257 (AAAW…VCIY).

It belongs to the cytochrome c oxidase subunit 3 family. In terms of assembly, component of the cytochrome c oxidase (complex IV, CIV), a multisubunit enzyme composed of a catalytic core of 3 subunits and several supernumerary subunits. The complex exists as a monomer or a dimer and forms supercomplexes (SCs) in the inner mitochondrial membrane with ubiquinol-cytochrome c oxidoreductase (cytochrome b-c1 complex, complex III, CIII).

Its subcellular location is the mitochondrion inner membrane. The catalysed reaction is 4 Fe(II)-[cytochrome c] + O2 + 8 H(+)(in) = 4 Fe(III)-[cytochrome c] + 2 H2O + 4 H(+)(out). In terms of biological role, component of the cytochrome c oxidase, the last enzyme in the mitochondrial electron transport chain which drives oxidative phosphorylation. The respiratory chain contains 3 multisubunit complexes succinate dehydrogenase (complex II, CII), ubiquinol-cytochrome c oxidoreductase (cytochrome b-c1 complex, complex III, CIII) and cytochrome c oxidase (complex IV, CIV), that cooperate to transfer electrons derived from NADH and succinate to molecular oxygen, creating an electrochemical gradient over the inner membrane that drives transmembrane transport and the ATP synthase. Cytochrome c oxidase is the component of the respiratory chain that catalyzes the reduction of oxygen to water. Electrons originating from reduced cytochrome c in the intermembrane space (IMS) are transferred via the dinuclear copper A center (CU(A)) of subunit 2 and heme A of subunit 1 to the active site in subunit 1, a binuclear center (BNC) formed by heme A3 and copper B (CU(B)). The BNC reduces molecular oxygen to 2 water molecules using 4 electrons from cytochrome c in the IMS and 4 protons from the mitochondrial matrix. The polypeptide is Cytochrome c oxidase subunit 3 (COX3) (Prototheca wickerhamii).